A 66-amino-acid polypeptide reads, in one-letter code: Large ribosomal subunit protein bL33c (66 aa).

Belongs to the bacterial ribosomal protein bL33 family.

The protein localises to the plastid. The protein resides in the chloroplast. This Illicium oligandrum (Star anise) protein is Large ribosomal subunit protein bL33c.